A 638-amino-acid polypeptide reads, in one-letter code: Outer dense fiber protein 2 (638 aa).

Residue Thr-73 is modified to Phosphothreonine. Ser-76 is subject to Phosphoserine; by TSSK4. Residues Ser-87 and Ser-90 each carry the phosphoserine modification. Phosphothreonine is present on Thr-91. Ser-96 and Ser-110 each carry phosphoserine. Lys-119 participates in a covalent cross-link: Glycyl lysine isopeptide (Lys-Gly) (interchain with G-Cter in SUMO2). Ser-120 carries the phosphoserine modification. Residues 125 to 198 (QKGERQMAKR…MSKLVEAEMD (74 aa)) are a coiled coil. Thr-212 is modified (phosphothreonine). 2 coiled-coil regions span residues 226-404 (DINT…AEQL) and 442-616 (EIIV…SDLR). Position 242 is a phosphoserine (Ser-242). Residues 373-396 (KQKGDRDKESLKKAIRAQKERAEK) are disordered. Ser-613 bears the Phosphoserine mark.

This sequence belongs to the ODF2 family. As to quaternary structure, self-associates. Associates with microtubules and forms a fibrillar structure partially linked to the microtubule network. Interacts via its C-terminus with PLK1. Interacts with ODF1. Localized at the distal/subdistal appendages of mother centrioles. Interacts with MARK4; the interaction is required for localization of ODF2 to centrioles. Interacts with TSSK4. Interacts with AKNA. Interacts with QRICH2. Interacts with CFAP58. Interacts with BBOF1. Interacts with CCDC38. Interacts with CCDC42. In terms of processing, tyrosine phosphorylated. Phosphorylated on Ser-76 by TSSK4.

Its subcellular location is the cytoplasm. The protein resides in the cytoskeleton. The protein localises to the microtubule organizing center. It is found in the centrosome. It localises to the cell projection. Its subcellular location is the cilium. The protein resides in the centriole. The protein localises to the spindle pole. It is found in the flagellum. In terms of biological role, seems to be a major component of sperm tail outer dense fibers (ODF). ODFs are filamentous structures located on the outside of the axoneme in the midpiece and principal piece of the mammalian sperm tail and may help to maintain the passive elastic structures and elastic recoil of the sperm tail. May have a modulating influence on sperm motility. Functions as a general scaffold protein that is specifically localized at the distal/subdistal appendages of mother centrioles. Component of the centrosome matrix required for the localization of PLK1 and NIN to the centrosomes. Required for the formation and/or maintenance of normal CETN1 assembly. This chain is Outer dense fiber protein 2 (ODF2), found in Macaca fascicularis (Crab-eating macaque).